We begin with the raw amino-acid sequence, 173 residues long: Photosystem I assembly protein Ycf3 (173 aa).

TPR repeat units follow at residues 36-69 (AFAY…EQDD), 73-106 (SYIL…NPRL), and 121-154 (GEQS…APNN).

This sequence belongs to the Ycf3 family.

It localises to the cellular thylakoid membrane. Essential for the assembly of the photosystem I (PSI) complex. May act as a chaperone-like factor to guide the assembly of the PSI subunits. The chain is Photosystem I assembly protein Ycf3 from Synechococcus sp. (strain JA-3-3Ab) (Cyanobacteria bacterium Yellowstone A-Prime).